Here is a 71-residue protein sequence, read N- to C-terminus: Small ribosomal subunit protein bS21 (71 aa).

The span at Ala49 to Lys59 shows a compositional bias: basic residues. Residues Ala49–Tyr71 are disordered. Over residues Val60–Tyr71 the composition is skewed to basic and acidic residues.

It belongs to the bacterial ribosomal protein bS21 family.

This Stutzerimonas stutzeri (strain A1501) (Pseudomonas stutzeri) protein is Small ribosomal subunit protein bS21.